Reading from the N-terminus, the 126-residue chain is Holo-[acyl-carrier-protein] synthase (126 aa).

Mg(2+)-binding residues include D9 and E58.

The protein belongs to the P-Pant transferase superfamily. AcpS family. Mg(2+) is required as a cofactor.

Its subcellular location is the cytoplasm. It carries out the reaction apo-[ACP] + CoA = holo-[ACP] + adenosine 3',5'-bisphosphate + H(+). Functionally, transfers the 4'-phosphopantetheine moiety from coenzyme A to a Ser of acyl-carrier-protein. This is Holo-[acyl-carrier-protein] synthase from Escherichia coli O139:H28 (strain E24377A / ETEC).